The following is a 1014-amino-acid chain: Chondroitin sulfate ABC exolyase (1014 aa).

A signal peptide spans 1-14; sequence MLILSFLCPAFLNA. 5 residues coordinate Ca(2+): serine 24, glutamate 26, aspartate 50, histidine 53, and aspartate 161. Active-site proton acceptor residues include histidine 345 and histidine 454. The active-site Proton donor is the tyrosine 461.

Belongs to the polysaccharide lyase 8 family. In terms of assembly, monomer. It depends on Ca(2+) as a cofactor. Requires Mg(2+) as cofactor.

Its subcellular location is the periplasm. The enzyme catalyses Exolytic removal of Delta(4)-unsaturated disaccharide residues from the non-reducing ends of both polymeric chondroitin/dermatan sulfates and their oligosaccharide fragments.. Its activity is regulated as follows. Specific activity for chondroitin sulfate substrates increases moderately (2-fold) while an increase of 25-fold is observed for dermatan sulfate as substrate upon addition of Ca(2+) or Mg(2+) ions. Increasing the concentration of Na(+), K(+) or Cs(+) chloride from 0 to 0.1 M, increases the activity against all substrates. Further increases in salt concentration reduces the activity dramatically, with 50% inhibition occurring at 0.15 M and nearly complete inhibition at 0.4 M salt. The addition of 10 mM Ca(2+) or Mg(2+) ions increases the activity against chondroitin 4- and 6-sulfates by 2-3-fold, while the activity against dermatan sulfate increases much more significantly by 50-fold. Addition of Mn(2+) and Zn(2+) reduces activity against chondroitin sulfate substrates, but increases the activity against dermatan sulfate. Increasing the concentration of CaCl(2) with both chondroitin 4- and 6-sulfates from 0 to 0.04 M increases the activity. A further increase reduces activity, with 50% inhibition at 0.065-0.085 M and a complete inhibition of the reaction at 0.2 M. In case of dermatan sulfate, the addition of low concentration of CaCl(2) dramatically increases the activity from the basal level. The maximal activity is reached at 0.01 M CaCl(2). In terms of biological role, broad-specificity glycosaminoglycan lyase, which acts in an exolytic fashion degrading chondroitin sulfates and dermatan sulfate to yield only disaccharide products. Has a preference for chondroitin 4-sulfate over chondroitin 6-sulfate. Has extremely low activity against hyaluronic acid. Is not active against acharan sulfate, heparin or heparan sulfate. In Bacteroides thetaiotaomicron, this protein is Chondroitin sulfate ABC exolyase (chonabc).